The chain runs to 489 residues: MPSTTSQNIGTVISIRGSVVDIRFDNISSDNQLPPIRTLLRTGKDNSIAIEVFSQLDDQRVRGIALTPTQGLARGMQVEDTGEPLQTPVGKGILSRMFDVFGNTIDKKDAPIDVEWRSVHNEPPPLARRSTKTEVFETGIKVIDVLMPLERGGKAGLFGGAGVGKTVLLTEMIHNMVGQHAGVSIFCGIGERCREGEELYREMKEAGVLDSMVMMFGQMNEPPGARFRVGHAALTMAEYFRDDEHRDVLLLMDNIFRFIQAGMEVSGLMGQMPARLGYQPTMGTELSQLEERIANTGSGAITSIQAVYVPADDFTDPAAVHTFSHLSASIVLSRKRASEGLYPAIDPLQSSSKMATPSIIGKRHYDLAQEIRRTLAQYSELKDIIAMLGMEQLSPEDRKVVGRARRLERFLTQPFFTTEQFTGMSGKLVSLDDALDGCERILQDEFEDYPESALYMIGAIDEAHEKSKKAAEDKPKAEEDEDATSLHDA.

An ATP-binding site is contributed by 159–166 (GGAGVGKT). The segment covering 465 to 477 (EKSKKAAEDKPKA) has biased composition (basic and acidic residues). Positions 465–489 (EKSKKAAEDKPKAEEDEDATSLHDA) are disordered.

It belongs to the ATPase alpha/beta chains family. F-type ATPases have 2 components, CF(1) - the catalytic core - and CF(0) - the membrane proton channel. CF(1) has five subunits: alpha(3), beta(3), gamma(1), delta(1), epsilon(1). CF(0) has three main subunits: a(1), b(2) and c(9-12). The alpha and beta chains form an alternating ring which encloses part of the gamma chain. CF(1) is attached to CF(0) by a central stalk formed by the gamma and epsilon chains, while a peripheral stalk is formed by the delta and b chains.

It is found in the cell inner membrane. The catalysed reaction is ATP + H2O + 4 H(+)(in) = ADP + phosphate + 5 H(+)(out). In terms of biological role, produces ATP from ADP in the presence of a proton gradient across the membrane. The catalytic sites are hosted primarily by the beta subunits. This chain is ATP synthase subunit beta 1, found in Marinomonas sp. (strain MWYL1).